Consider the following 372-residue polypeptide: MAPTVLHLRSETKHLEHRSALTPTTTAELIKAGYIVNVERSPERIFDDEEFEKAGATLVPEHSWVDAPKEHIIVGLKELEEKDFPLKHVHVQFAHCYKQQAGWENVLARFPRGGGTLLDLEFLVDEHGRRVAAFGFHAGFAGAALALEVWAWQLNHSEPFPGVESYPNEDALIADVKKAVKEGVEAAGRLPRVIVIGARGRCGSGAVSALKKAGIPDENILDWDMAETAKGGPFKEITDSDIFVNCIYLTSKIPNFVNMESLQVPDRQLRVVCDVSADTTSPFTPVPIYTVATTFDKPTVPVDGLTSGPPLSVISIDHLPSLLPREASEAFSHDLLPSLLTLNDWQNSPVWARAKQLFDEKVATLPESALQK.

Residues arginine 18 and lysine 77 each coordinate L-saccharopine. Catalysis depends on lysine 77, which acts as the Proton acceptor. Histidine 95 (proton donor) is an active-site residue. Residue glutamine 100 participates in L-saccharopine binding. Arginine 129 contributes to the NAD(+) binding site. Residues arginine 130 and phenylalanine 134 each contribute to the L-saccharopine site. NAD(+)-binding positions include 200–201, aspartate 224, threonine 228, tyrosine 248, and valine 275; that span reads GR. Cysteines 202 and 246 form a disulfide. Position 276–278 (276–278) interacts with L-saccharopine; sequence SAD. 316-319 contributes to the NAD(+) binding site; it reads IDHL.

Belongs to the AlaDH/PNT family. Monomer.

It catalyses the reaction L-saccharopine + NAD(+) + H2O = L-lysine + 2-oxoglutarate + NADH + H(+). The protein operates within amino-acid biosynthesis; L-lysine biosynthesis via AAA pathway; L-lysine from L-alpha-aminoadipate (fungal route): step 3/3. Catalyzes the NAD(+)-dependent cleavage of saccharopine to L-lysine and 2-oxoglutarate, the final step in the alpha-aminoadipate (AAA) pathway for lysin biosynthesis. This chain is Saccharopine dehydrogenase [NAD(+), L-lysine-forming] (lys-4), found in Neurospora crassa (strain ATCC 24698 / 74-OR23-1A / CBS 708.71 / DSM 1257 / FGSC 987).